We begin with the raw amino-acid sequence, 260 residues long: Proteasome subunit alpha (260 aa).

The tract at residues L231–N260 is disordered.

It belongs to the peptidase T1A family. In terms of assembly, the 20S proteasome core is composed of 14 alpha and 14 beta subunits that assemble into four stacked heptameric rings, resulting in a barrel-shaped structure. The two inner rings, each composed of seven catalytic beta subunits, are sandwiched by two outer rings, each composed of seven alpha subunits. The catalytic chamber with the active sites is on the inside of the barrel. Has a gated structure, the ends of the cylinder being occluded by the N-termini of the alpha-subunits. Is capped by the proteasome-associated ATPase, ARC.

The protein localises to the cytoplasm. Its pathway is protein degradation; proteasomal Pup-dependent pathway. With respect to regulation, the formation of the proteasomal ATPase ARC-20S proteasome complex, likely via the docking of the C-termini of ARC into the intersubunit pockets in the alpha-rings, may trigger opening of the gate for substrate entry. Interconversion between the open-gate and close-gate conformations leads to a dynamic regulation of the 20S proteasome proteolysis activity. Its function is as follows. Component of the proteasome core, a large protease complex with broad specificity involved in protein degradation. The polypeptide is Proteasome subunit alpha (Mycobacteroides abscessus (strain ATCC 19977 / DSM 44196 / CCUG 20993 / CIP 104536 / JCM 13569 / NCTC 13031 / TMC 1543 / L948) (Mycobacterium abscessus)).